The sequence spans 229 residues: uncharacterized protein (229 aa).

The first 17 residues, 1 to 17 (MKKIIALMLFLTFFAHA), serve as a signal peptide directing secretion.

This is an uncharacterized protein from Escherichia coli O157:H7.